The sequence spans 344 residues: Tripartite motif-containing protein 44 (344 aa).

Disordered regions lie at residues 1-25 (MASG…EPDE) and 66-165 (AWTP…EFDP). Basic and acidic residues predominate over residues 75-92 (GAGKEEAEVKVEQEREIE). Acidic residues predominate over residues 93–165 (SEAGEESESE…ETEAESEFDP (73 aa)). The B box-type zinc-finger motif lies at 174–215 (VAKRKCPDHGLDLSTYCQEDRQLICVLCPVIGAHQGHQLSTL). Zn(2+)-binding residues include Cys179, His182, Cys201, and His207. Positions 290–325 (AHVTEILADIQSHMDRLMTQMAQAKEQLDTSNESAE) form a coiled coil. Residues 309-344 (QMAQAKEQLDTSNESAEPKAEGDEEGPSGASEEEDT) are disordered. Acidic residues predominate over residues 330 to 344 (GDEEGPSGASEEEDT). A phosphoserine mark is found at Ser336 and Ser339.

As to quaternary structure, interacts (via coiled coil) with TRIM17 (via coiled coil). In terms of tissue distribution, highly expressed in testis.

May play a role in the process of differentiation and maturation of neuronal cells. May regulate the activity of TRIM17. Is a negative regulator of PAX6 expression. The protein is Tripartite motif-containing protein 44 (TRIM44) of Homo sapiens (Human).